The sequence spans 208 residues: Histone H1t (208 aa).

The segment covering Met1–Leu12 has biased composition (polar residues). The segment at Met1 to Gly39 is disordered. Residue Ser9 is modified to Phosphoserine. The H15 domain maps to Arg38–Lys111. Arg56 carries the citrulline modification. The segment at Gly93–Lys208 is disordered. The segment covering Lys121–Gly134 has biased composition (basic residues). Ser141 bears the Phosphoserine mark. Residues Lys143–Lys154 show a composition bias toward basic residues. Thr156 carries the post-translational modification Phosphothreonine. Residues Ser163, Ser178, and Ser187 each carry the phosphoserine modification. The segment covering Thr199–Lys208 has biased composition (basic and acidic residues).

The protein belongs to the histone H1/H5 family. Post-translationally, phosphorylated in early spermatids. In terms of processing, citrullination at Arg-56 (H1R54ci) by PADI4 takes place within the DNA-binding site of H1 and results in its displacement from chromatin and global chromatin decondensation, thereby promoting pluripotency and stem cell maintenance. As to expression, testis-specific. Expressed in pachytene spermatocytes during meiotic prophase I.

The protein resides in the nucleus. It is found in the chromosome. Functionally, testis-specific histone H1 that forms less compacted chromatin compared to other H1 histone subtypes. Formation of more relaxed chromatin may be required to promote chromatin architecture required for proper chromosome regulation during meiosis, such as homologous recombination. Histones H1 act as linkers that bind to nucleosomes and compact polynucleosomes into a higher-order chromatin configuration. The sequence is that of Histone H1t from Rattus norvegicus (Rat).